A 430-amino-acid polypeptide reads, in one-letter code: Adenylosuccinate synthetase (430 aa).

Residues 13–19 (GDEGKGK) and 41–43 (GHT) contribute to the GTP site. Catalysis depends on Asp-14, which acts as the Proton acceptor. Mg(2+)-binding residues include Asp-14 and Gly-41. IMP-binding positions include 14 to 17 (DEGK), 39 to 42 (NAGH), Thr-130, Arg-144, Gln-225, Thr-240, and Arg-304. Catalysis depends on His-42, which acts as the Proton donor. Residue 300–306 (ASTGRPR) coordinates substrate. Residues Arg-306, 332–334 (KLD), and 414–416 (STG) contribute to the GTP site.

Belongs to the adenylosuccinate synthetase family. In terms of assembly, homodimer. Requires Mg(2+) as cofactor.

The protein resides in the cytoplasm. It catalyses the reaction IMP + L-aspartate + GTP = N(6)-(1,2-dicarboxyethyl)-AMP + GDP + phosphate + 2 H(+). Its pathway is purine metabolism; AMP biosynthesis via de novo pathway; AMP from IMP: step 1/2. Its function is as follows. Plays an important role in the de novo pathway of purine nucleotide biosynthesis. Catalyzes the first committed step in the biosynthesis of AMP from IMP. This chain is Adenylosuccinate synthetase, found in Xylella fastidiosa (strain M12).